Consider the following 202-residue polypeptide: Methylthioribulose-1-phosphate dehydratase (202 aa).

Residues H93 and H95 each coordinate Zn(2+).

The protein belongs to the aldolase class II family. MtnB subfamily. Requires Zn(2+) as cofactor.

It catalyses the reaction 5-(methylsulfanyl)-D-ribulose 1-phosphate = 5-methylsulfanyl-2,3-dioxopentyl phosphate + H2O. Its pathway is amino-acid biosynthesis; L-methionine biosynthesis via salvage pathway; L-methionine from S-methyl-5-thio-alpha-D-ribose 1-phosphate: step 2/6. Functionally, catalyzes the dehydration of methylthioribulose-1-phosphate (MTRu-1-P) into 2,3-diketo-5-methylthiopentyl-1-phosphate (DK-MTP-1-P). This is Methylthioribulose-1-phosphate dehydratase from Klebsiella pneumoniae subsp. pneumoniae (strain ATCC 700721 / MGH 78578).